The following is a 476-amino-acid chain: Glutamyl-tRNA(Gln) amidotransferase subunit A (476 aa).

Catalysis depends on charge relay system residues K77 and S152. The active-site Acyl-ester intermediate is the S176.

This sequence belongs to the amidase family. GatA subfamily. Heterotrimer of A, B and C subunits.

The catalysed reaction is L-glutamyl-tRNA(Gln) + L-glutamine + ATP + H2O = L-glutaminyl-tRNA(Gln) + L-glutamate + ADP + phosphate + H(+). Allows the formation of correctly charged Gln-tRNA(Gln) through the transamidation of misacylated Glu-tRNA(Gln) in organisms which lack glutaminyl-tRNA synthetase. The reaction takes place in the presence of glutamine and ATP through an activated gamma-phospho-Glu-tRNA(Gln). In Acidobacterium capsulatum (strain ATCC 51196 / DSM 11244 / BCRC 80197 / JCM 7670 / NBRC 15755 / NCIMB 13165 / 161), this protein is Glutamyl-tRNA(Gln) amidotransferase subunit A.